Here is a 475-residue protein sequence, read N- to C-terminus: Pentatricopeptide repeat-containing protein At1g29710, mitochondrial (475 aa).

A mitochondrion-targeting transit peptide spans 1–37 (MVRLWCGKLRLWKPYLALATQSRNSWFCSGGGAPSHH). 6 PPR repeats span residues 83–117 (AQNV…GYAM), 118–148 (DLIR…IIAL), 153–183 (DVGA…MPEW), 184–218 (NSGT…GNKP), 219–254 (NGEI…GIVP), and 255–285 (SMEH…MPME). The interval 350-380 (YFYSTFRPVDSSHPQMNIIYETLMSLRSQLK) is type E(+) motif. The type DYW motif stretch occupies residues 381–475 (EMGYVPDTRY…NGVCRCNNLW (95 aa)).

Belongs to the PPR family. PCMP-H subfamily.

The protein localises to the mitochondrion. This Arabidopsis thaliana (Mouse-ear cress) protein is Pentatricopeptide repeat-containing protein At1g29710, mitochondrial (PCMP-H67).